Reading from the N-terminus, the 427-residue chain is Adenylosuccinate synthetase (427 aa).

GTP is bound by residues 12–18 and 40–42; these read GDEGKGK and GHT. Catalysis depends on aspartate 13, which acts as the Proton acceptor. Mg(2+)-binding residues include aspartate 13 and glycine 40. IMP is bound by residues 13-16, 38-41, threonine 128, arginine 142, glutamine 223, threonine 238, and arginine 302; these read DEGK and NAGH. Histidine 41 (proton donor) is an active-site residue. Residue 298 to 304 coordinates substrate; it reads TTTGRPR. GTP-binding positions include arginine 304, 330–332, and 412–414; these read SID and SVG.

This sequence belongs to the adenylosuccinate synthetase family. In terms of assembly, homodimer. Mg(2+) serves as cofactor.

It localises to the cytoplasm. It carries out the reaction IMP + L-aspartate + GTP = N(6)-(1,2-dicarboxyethyl)-AMP + GDP + phosphate + 2 H(+). It participates in purine metabolism; AMP biosynthesis via de novo pathway; AMP from IMP: step 1/2. Functionally, plays an important role in the de novo pathway of purine nucleotide biosynthesis. Catalyzes the first committed step in the biosynthesis of AMP from IMP. The protein is Adenylosuccinate synthetase of Staphylococcus epidermidis (strain ATCC 35984 / DSM 28319 / BCRC 17069 / CCUG 31568 / BM 3577 / RP62A).